The primary structure comprises 130 residues: Small ribosomal subunit protein uS9 (130 aa).

This sequence belongs to the universal ribosomal protein uS9 family.

The chain is Small ribosomal subunit protein uS9 from Lawsonia intracellularis (strain PHE/MN1-00).